A 625-amino-acid polypeptide reads, in one-letter code: MPNSILFLLLSFLYLTNCVAQSPSQTCPLDFSHVLTIPWNTTDCQKSDKSADSKNSCCQSLLTLIGIPLAHRLKQTSNFRLPNLATSISCLNNLQTKLSSLSLSSNLTSLCFDPNQFVINNETCAGIQTTQDWVSRLGPSTALDSACSSGLTDLTRCDACVAAGFRVQKQLITLDGNSSHGVYCYHFVVTYAAGIVNKKGPESDDALSCLFSLSLRSPLNSKKKRHTVALALGITGAIFGALVIAGLICLYFRFGKAVKGGEVGWEDQGSRPKWRPNTGSIWFKIEELEKATNNFSQKNFIGRGGFGFVYKGVLPDGSVIAVKKVIESEFQGDAEFRNEVEIISNLKHRNLVPLRGCSMVDDDSESQRYLVYDYMSNGNLDDHLFPRGETTKMPLSWPQRKSIILDVAKGLAYLHYGVKPAIYHRDIKGTNILLDVDMRARVADFGLAKQSREGESHLTTRVAGTHGYLAPEYALYGQLTEKSDVYSFGVVILEIMCGRKALDLSTSGSPNTFLITDWAWSLVKAGKTEEALEQSLLREEGSGLSNPKGIMERFLQVGILCAHVLVALRPTILDALKMLEGDIEVPPIPDRPVPLAHPSYRMDGNGFTISPALSGLQIHSGDMLR.

A signal peptide spans 1–20 (MPNSILFLLLSFLYLTNCVA). Over 21–227 (QSPSQTCPLD…PLNSKKKRHT (207 aa)) the chain is Extracellular. 4 N-linked (GlcNAc...) asparagine glycosylation sites follow: N40, N106, N121, and N177. A helical transmembrane segment spans residues 228–248 (VALALGITGAIFGALVIAGLI). The Cytoplasmic portion of the chain corresponds to 249–625 (CLYFRFGKAV…LQIHSGDMLR (377 aa)). Positions 295 to 555 (FSQKNFIGRG…NPKGIMERFL (261 aa)) constitute a Protein kinase domain. Residues 301 to 309 (IGRGGFGFV) and K323 contribute to the ATP site. The active-site Proton acceptor is D426.

This sequence belongs to the protein kinase superfamily. Ser/Thr protein kinase family.

It is found in the membrane. The enzyme catalyses L-seryl-[protein] + ATP = O-phospho-L-seryl-[protein] + ADP + H(+). The catalysed reaction is L-threonyl-[protein] + ATP = O-phospho-L-threonyl-[protein] + ADP + H(+). This chain is Probable receptor-like protein kinase At1g11050, found in Arabidopsis thaliana (Mouse-ear cress).